The sequence spans 292 residues: Phosphoribulokinase, plasmid (292 aa).

12 to 20 (GSSGAGTTS) provides a ligand contact to ATP.

This sequence belongs to the phosphoribulokinase family. As to quaternary structure, homooctamer.

It catalyses the reaction D-ribulose 5-phosphate + ATP = D-ribulose 1,5-bisphosphate + ADP + H(+). It functions in the pathway carbohydrate biosynthesis; Calvin cycle. This chain is Phosphoribulokinase, plasmid (cfxP), found in Cupriavidus necator (strain ATCC 17699 / DSM 428 / KCTC 22496 / NCIMB 10442 / H16 / Stanier 337) (Ralstonia eutropha).